The following is a 258-amino-acid chain: Deoxyribose-phosphate aldolase (258 aa).

The Proton donor/acceptor role is filled by D101. The Schiff-base intermediate with acetaldehyde role is filled by K166. The Proton donor/acceptor role is filled by K200.

It belongs to the DeoC/FbaB aldolase family. DeoC type 2 subfamily.

It localises to the cytoplasm. It catalyses the reaction 2-deoxy-D-ribose 5-phosphate = D-glyceraldehyde 3-phosphate + acetaldehyde. The protein operates within carbohydrate degradation; 2-deoxy-D-ribose 1-phosphate degradation; D-glyceraldehyde 3-phosphate and acetaldehyde from 2-deoxy-alpha-D-ribose 1-phosphate: step 2/2. Functionally, catalyzes a reversible aldol reaction between acetaldehyde and D-glyceraldehyde 3-phosphate to generate 2-deoxy-D-ribose 5-phosphate. The polypeptide is Deoxyribose-phosphate aldolase (Actinobacillus pleuropneumoniae serotype 7 (strain AP76)).